We begin with the raw amino-acid sequence, 292 residues long: Protoheme IX farnesyltransferase (292 aa).

The next 9 helical transmembrane spans lie at 13–33, 35–55, 84–104, 106–126, 135–155, 161–181, 206–226, 231–251, and 263–283; these read ILFG…QGHV, FLLL…GCVV, TALI…WFWV, PYSF…YSLW, TIIG…AVTH, ALLI…AIAI, VECL…YCFG, FFLL…IIGF, and LFLF…FTYQ.

This sequence belongs to the UbiA prenyltransferase family. Protoheme IX farnesyltransferase subfamily.

Its subcellular location is the cell inner membrane. It carries out the reaction heme b + (2E,6E)-farnesyl diphosphate + H2O = Fe(II)-heme o + diphosphate. It functions in the pathway porphyrin-containing compound metabolism; heme O biosynthesis; heme O from protoheme: step 1/1. In terms of biological role, converts heme B (protoheme IX) to heme O by substitution of the vinyl group on carbon 2 of heme B porphyrin ring with a hydroxyethyl farnesyl side group. The chain is Protoheme IX farnesyltransferase from Acinetobacter baylyi (strain ATCC 33305 / BD413 / ADP1).